Consider the following 373-residue polypeptide: Leucine aminopeptidase 1 (373 aa).

An N-terminal signal peptide occupies residues 1–18 (MKLLSVLALSATASSVLG). Residues 19–75 (ASIPVDTRAEKFLIELAPGETRWVTEEEKWALKESGQDFFDITDEEVGFTAAVAQPA) constitute a propeptide that is removed on maturation. Histidine 176 and aspartate 195 together coordinate Zn(2+). N-linked (GlcNAc...) asparagine glycosylation occurs at asparagine 196. Zn(2+)-binding residues include glutamate 234 and aspartate 261. The N-linked (GlcNAc...) asparagine glycan is linked to asparagine 288. The cysteines at positions 310 and 314 are disulfide-linked. Histidine 343 lines the Zn(2+) pocket. A glycan (N-linked (GlcNAc...) asparagine) is linked at asparagine 348.

It belongs to the peptidase M28 family. M28E subfamily. Monomer. Requires Zn(2+) as cofactor.

The protein localises to the secreted. Its function is as follows. Extracellular aminopeptidase that allows assimilation of proteinaceous substrates. This is Leucine aminopeptidase 1 (LAP1) from Arthroderma gypseum (strain ATCC MYA-4604 / CBS 118893) (Microsporum gypseum).